The sequence spans 273 residues: Outer surface protein A (273 aa).

An N-terminal signal peptide occupies residues 1–16 (MKKYLLGIGLILALIA). Cysteine 17 carries N-palmitoyl cysteine lipidation. A lipid anchor (S-diacylglycerol cysteine) is attached at cysteine 17.

The protein belongs to the OspA lipoprotein family.

It is found in the cell outer membrane. It localises to the cell surface. The polypeptide is Outer surface protein A (Borreliella burgdorferi (Lyme disease spirochete)).